Consider the following 245-residue polypeptide: MDKTRTFLDVKEYPDTEVQKNRVLTLEEWQEKWVSRRIGFHQEQGHKLLKKHLDTFLKGENGLRVFFPLCGKAVEMKWFADRGHSVVGVEISELGIREFFAEQNLSYTEEPIVEIPGGKIFKSSSGNISLYCCSLFDLPRANIGKFDRIWDRGALVAINPGDRECYADIMLSLTRKGFHYLLAVLCYDPTKHAGPPFYVPEAEIKKLFGSICNIHCLEKVDVFEEQHKSWGIDYIIEKLYLFTEK.

S-adenosyl-L-methionine is bound at residue 29–40 (WQEKWVSRRIGF). Phe40 lines the substrate pocket. Position 58 is an N6-acetyllysine (Lys58). Positions 69, 90, and 152 each coordinate S-adenosyl-L-methionine.

The protein belongs to the class I-like SAM-binding methyltransferase superfamily. TPMT family. In terms of assembly, monomer.

The protein localises to the cytoplasm. It catalyses the reaction S-adenosyl-L-methionine + a thiopurine = S-adenosyl-L-homocysteine + a thiopurine S-methylether.. This Lycaon pictus (African wild dog) protein is Thiopurine S-methyltransferase (TPMT).